The following is a 378-amino-acid chain: MTAPASAPRLAQARRIVIKIGSALLVDSANASLRLEWLQSVCADIADLRSRGAEVIVVSSGAISLARHRLGLTSRRLRLDEKQAMASVGQIGLAQGWSAALAGHDLVAAQLLLTPDDTENRERHLNARATLQTLLDLGCVPVINENDAIATGEIRFGDNDRLGARVAQMTGADCLVLLSDIDGLYTADPRQDPSARHIPVVEQMTDEIMAMGGEPPPGYSSGGMRTKLLAARIATRAGANMVIAAGQEHHPLRRLQNGGLCTWFMAQTDAGSARKRWIGGSLQPKGTLTIDAGARRALEESASLLPAGVTGLEGSFGRGDLVLIRDADGSIIGRGLIAYDSEESQKLIGHRSGEMEQLLGYRGRDALIHRDDLALDLP.

An ATP-binding site is contributed by Lys19. Residues Ser60, Asp147, and Asn159 each contribute to the substrate site. ATP-binding positions include 179–180 (SD) and 221–227 (SGGMRTK). The PUA domain maps to 285-362 (KGTLTIDAGA…GEMEQLLGYR (78 aa)).

This sequence belongs to the glutamate 5-kinase family.

The protein resides in the cytoplasm. The catalysed reaction is L-glutamate + ATP = L-glutamyl 5-phosphate + ADP. The protein operates within amino-acid biosynthesis; L-proline biosynthesis; L-glutamate 5-semialdehyde from L-glutamate: step 1/2. Catalyzes the transfer of a phosphate group to glutamate to form L-glutamate 5-phosphate. The chain is Glutamate 5-kinase from Gluconobacter oxydans (strain 621H) (Gluconobacter suboxydans).